We begin with the raw amino-acid sequence, 1350 residues long: Probable serine/threonine-protein kinase DDB_G0278845 (1350 aa).

Disordered regions lie at residues 66–109 (RELN…NNIR), 121–159 (ENGLLESPTSPIRTSSTPTTPTSPPFITSPPFITSPKGL), 179–249 (LANN…LNSI), 270–296 (SSINGNTTTTTTNTYSYNDNDNVNEYS), 337–396 (NNYN…RDDL), 431–506 (GSTI…EKKK), 525–596 (NDSN…IPTP), and 612–701 (NNNS…NTNE). The span at 84–98 (KYLTSSHSSVVIPQD) shows a compositional bias: polar residues. 2 stretches are compositionally biased toward low complexity: residues 127 to 140 (SPTSPIRTSSTPTT) and 181 to 210 (NNNNNNNNSNNSNNNSNSSNSNISCSNNSN). Residues 211-222 (KISRLINNSNTT) show a composition bias toward polar residues. The span at 223–235 (DSNASIRSSNNNN) shows a compositional bias: low complexity. Residues 236-246 (DDFDNNDDEDL) are compositionally biased toward acidic residues. 2 stretches are compositionally biased toward low complexity: residues 270-293 (SSINGNTTTTTTNTYSYNDNDNVN) and 337-391 (NNYN…GYNN). Residues 431–443 (GSTIFTSTSSDIA) show a composition bias toward polar residues. Positions 454-482 (NENENENENENENENENDNDSDSENENEN) are enriched in acidic residues. Composition is skewed to low complexity over residues 483–495 (DNSIGNKSNKSNS) and 525–551 (NDSNNNNNNNNSGNNNSFISNGSPFSP). Residues 565 to 592 (PKPTLQRQRSNSKNVLYSPNASPSNSCK) are compositionally biased toward polar residues. 3 stretches are compositionally biased toward low complexity: residues 612-637 (NNNSNNIENQNNNNNNIDNNIDNNID), 645-679 (NNNNNNNNNNNNNNNNNNNNNNNNNNNNNNNNNNN), and 690-701 (KKTPNNKINTNE). A Protein kinase domain is found at 756-1082 (FTLIEKIGEG…VENIKNHIFF (327 aa)). Residues 762-770 (IGEGGFGQV) and Lys-785 each bind ATP. Residue Asp-880 is the Proton acceptor of the active site. In terms of domain architecture, AGC-kinase C-terminal spans 1083-1203 (NGVPWGKLHD…PRADDQPLLW (121 aa)). 4 disordered regions span residues 1129–1159 (SLLPPPLPPPPQTPTQPQQPSLPPQTPNDKM), 1190–1219 (GFTYPRADDQPLLWNNNNNNNNNNNNNNNN), 1232–1285 (NNNN…NKTV), and 1300–1350 (NCNN…KQQQ). A compositionally biased stretch (pro residues) spans 1131-1142 (LPPPLPPPPQTP). Composition is skewed to low complexity over residues 1204–1219 (NNNNNNNNNNNNNNNN), 1232–1283 (NNNN…SNNK), and 1300–1313 (NCNNNNNNDENNIN). 2 stretches are compositionally biased toward polar residues: residues 1314–1330 (TGNLTPPNSSPFNSGEN) and 1338–1350 (PTSPYGSYSKQQQ).

It belongs to the protein kinase superfamily. AGC Ser/Thr protein kinase family.

It carries out the reaction L-seryl-[protein] + ATP = O-phospho-L-seryl-[protein] + ADP + H(+). The catalysed reaction is L-threonyl-[protein] + ATP = O-phospho-L-threonyl-[protein] + ADP + H(+). The protein is Probable serine/threonine-protein kinase DDB_G0278845 of Dictyostelium discoideum (Social amoeba).